The following is a 727-amino-acid chain: Elongation factor 2 (727 aa).

The tr-type G domain occupies 19–260 (EQIRNMGICA…MSIKHLPNPL (242 aa)). Residues 28 to 35 (AHIDHGKT), 94 to 98 (DTPGH), and 148 to 151 (NKVD) contribute to the GTP site. Diphthamide is present on H603.

It belongs to the TRAFAC class translation factor GTPase superfamily. Classic translation factor GTPase family. EF-G/EF-2 subfamily.

The protein localises to the cytoplasm. Functionally, catalyzes the GTP-dependent ribosomal translocation step during translation elongation. During this step, the ribosome changes from the pre-translocational (PRE) to the post-translocational (POST) state as the newly formed A-site-bound peptidyl-tRNA and P-site-bound deacylated tRNA move to the P and E sites, respectively. Catalyzes the coordinated movement of the two tRNA molecules, the mRNA and conformational changes in the ribosome. The protein is Elongation factor 2 of Methanococcus maripaludis (strain DSM 14266 / JCM 13030 / NBRC 101832 / S2 / LL).